The primary structure comprises 537 residues: uncharacterized protein (537 aa).

The next 6 helical transmembrane spans lie at 5-25, 40-60, 63-83, 115-135, 149-169, and 197-217; these read IGLG…PWFV, LAVA…FFGW, VLWV…MAVV, GLYY…HLEG, VYLL…WVTL, and VGIV…ALVI.

The protein localises to the plastid. Its subcellular location is the chloroplast membrane. This is an uncharacterized protein from Ostreococcus tauri.